A 373-amino-acid polypeptide reads, in one-letter code: Dual-specificity RNA methyltransferase RlmN (373 aa).

The active-site Proton acceptor is the Glu94. One can recognise a Radical SAM core domain in the interval 100-339; sequence EDDRATLCVS…VIVRKTRGDD (240 aa). Cys107 and Cys344 are disulfide-bonded. [4Fe-4S] cluster-binding residues include Cys114, Cys118, and Cys121. S-adenosyl-L-methionine contacts are provided by residues 168–169, Ser200, 222–224, and Asn301; these read GE and SIH. Cys344 acts as the S-methylcysteine intermediate in catalysis.

It belongs to the radical SAM superfamily. RlmN family. [4Fe-4S] cluster is required as a cofactor.

The protein resides in the cytoplasm. It carries out the reaction adenosine(2503) in 23S rRNA + 2 reduced [2Fe-2S]-[ferredoxin] + 2 S-adenosyl-L-methionine = 2-methyladenosine(2503) in 23S rRNA + 5'-deoxyadenosine + L-methionine + 2 oxidized [2Fe-2S]-[ferredoxin] + S-adenosyl-L-homocysteine. The catalysed reaction is adenosine(37) in tRNA + 2 reduced [2Fe-2S]-[ferredoxin] + 2 S-adenosyl-L-methionine = 2-methyladenosine(37) in tRNA + 5'-deoxyadenosine + L-methionine + 2 oxidized [2Fe-2S]-[ferredoxin] + S-adenosyl-L-homocysteine. Specifically methylates position 2 of adenine 2503 in 23S rRNA and position 2 of adenine 37 in tRNAs. m2A2503 modification seems to play a crucial role in the proofreading step occurring at the peptidyl transferase center and thus would serve to optimize ribosomal fidelity. In Shewanella baltica (strain OS223), this protein is Dual-specificity RNA methyltransferase RlmN.